Reading from the N-terminus, the 412-residue chain is Protein MITOFERRINLIKE 1, chloroplastic (412 aa).

A chloroplast-targeting transit peptide spans Met-1–Lys-92. Residues Val-43 to Pro-83 form a disordered region. Solcar repeat units lie at residues Glu-112 to Leu-198, Pro-206 to Ala-288, and Leu-298 to Thr-392. The next 6 helical transmembrane spans lie at Ile-115–Leu-135, Ile-167–Val-187, Val-208–Pro-228, Ala-262–Phe-282, Ser-303–Val-323, and Thr-365–Ala-385.

The protein belongs to the mitochondrial carrier (TC 2.A.29) family. In terms of tissue distribution, expressed in leaves, developing flowers and siliques.

It localises to the plastid. Its subcellular location is the chloroplast inner membrane. In terms of biological role, probably involved in iron transport into chloroplasts. The polypeptide is Protein MITOFERRINLIKE 1, chloroplastic (MFL1) (Arabidopsis thaliana (Mouse-ear cress)).